The sequence spans 369 residues: Alanine racemase (369 aa).

The active-site Proton acceptor; specific for D-alanine is lysine 35. The residue at position 35 (lysine 35) is an N6-(pyridoxal phosphate)lysine. Arginine 130 serves as a coordination point for substrate. Tyrosine 257 (proton acceptor; specific for L-alanine) is an active-site residue. Methionine 305 contributes to the substrate binding site.

The protein belongs to the alanine racemase family. Requires pyridoxal 5'-phosphate as cofactor.

The enzyme catalyses L-alanine = D-alanine. It participates in amino-acid biosynthesis; D-alanine biosynthesis; D-alanine from L-alanine: step 1/1. Its function is as follows. Catalyzes the interconversion of L-alanine and D-alanine. May also act on other amino acids. This Paracidovorax citrulli (strain AAC00-1) (Acidovorax citrulli) protein is Alanine racemase (alr).